Consider the following 196-residue polypeptide: GTP cyclohydrolase 1 (196 aa).

Residues Cys86, His89, and Cys158 each contribute to the Zn(2+) site.

This sequence belongs to the GTP cyclohydrolase I family. As to quaternary structure, toroid-shaped homodecamer, composed of two pentamers of five dimers.

It catalyses the reaction GTP + H2O = 7,8-dihydroneopterin 3'-triphosphate + formate + H(+). The protein operates within cofactor biosynthesis; 7,8-dihydroneopterin triphosphate biosynthesis; 7,8-dihydroneopterin triphosphate from GTP: step 1/1. The sequence is that of GTP cyclohydrolase 1 from Clostridium botulinum (strain Langeland / NCTC 10281 / Type F).